Consider the following 224-residue polypeptide: Adenylate kinase (224 aa).

10–15 (GSGKST) contributes to the ATP binding site. The segment at 30–59 (ASGDIIRAEINKGNALGREMKKYIEKGDLL) is NMP. AMP-binding positions include S31, R36, 57–59 (DLL), 83–86 (GYPR), and Q90. The LID stretch occupies residues 124 to 161 (GRRICRQCGAVYHIKYNPSKVPGKCDICGGEVIQREDD). R125 lines the ATP pocket. The Zn(2+) site is built by C128 and C131. An ATP-binding site is contributed by 134–135 (VY). Zn(2+)-binding residues include C148 and C151. R158 and R169 together coordinate AMP. G197 is a binding site for ATP.

This sequence belongs to the adenylate kinase family. In terms of assembly, monomer.

Its subcellular location is the cytoplasm. It catalyses the reaction AMP + ATP = 2 ADP. It functions in the pathway purine metabolism; AMP biosynthesis via salvage pathway; AMP from ADP: step 1/1. In terms of biological role, catalyzes the reversible transfer of the terminal phosphate group between ATP and AMP. Plays an important role in cellular energy homeostasis and in adenine nucleotide metabolism. The polypeptide is Adenylate kinase (Thermococcus sibiricus (strain DSM 12597 / MM 739)).